A 118-amino-acid chain; its full sequence is MARVVALVLLGLLSLTGLEAVPRVPKVQVYSRHPAENGKPNFLNCYVSGFHPPEIEIDLLKNGEKMKVDRSDLSFSKDWSFYLLVHTDFTPNGVDEYSCRVQHSTLKDPLIVKWDRDL.

Residues 1–20 form the signal peptide; the sequence is MARVVALVLLGLLSLTGLEA. In terms of domain architecture, Ig-like C1-type spans 22–115; it reads PRVPKVQVYS…LKDPLIVKWD (94 aa). Residues cysteine 45 and cysteine 99 are joined by a disulfide bond.

It belongs to the beta-2-microglobulin family. In terms of assembly, heterodimer of an alpha chain and a beta chain. Beta-2-microglobulin is the beta-chain of major histocompatibility complex class I molecules.

Its subcellular location is the secreted. Functionally, component of the class I major histocompatibility complex (MHC). Involved in the presentation of peptide antigens to the immune system. In Equus caballus (Horse), this protein is Beta-2-microglobulin (B2M).